We begin with the raw amino-acid sequence, 165 residues long: Chemotaxis protein CheW (165 aa).

This sequence belongs to the CheW family.

In terms of biological role, plays an essential role in chemotaxis signal transduction system in order to colonize the host stomach. The chain is Chemotaxis protein CheW from Helicobacter pylori (strain ATCC 700392 / 26695) (Campylobacter pylori).